The primary structure comprises 147 residues: Transcriptional repressor NrdR (147 aa).

Residues 3–34 (CPYCGNVETTVVETRESDEGDAVRRRRRCSAC) fold into a zinc finger. One can recognise an ATP-cone domain in the interval 49-139 (PAVVKKNGDR…VYREFEDIDA (91 aa)).

It belongs to the NrdR family. Zn(2+) serves as cofactor.

Negatively regulates transcription of bacterial ribonucleotide reductase nrd genes and operons by binding to NrdR-boxes. This Leptothrix cholodnii (strain ATCC 51168 / LMG 8142 / SP-6) (Leptothrix discophora (strain SP-6)) protein is Transcriptional repressor NrdR.